The primary structure comprises 233 residues: Probable O-methyltransferase Rv1703c (233 aa).

S-adenosyl-L-methionine-binding positions include valine 55, glutamate 77, 79–80, and glutamate 102; that span reads GT. Aspartate 157 serves as a coordination point for a divalent metal cation. Residue aspartate 159 participates in S-adenosyl-L-methionine binding. Residues aspartate 185 and asparagine 186 each contribute to the a divalent metal cation site.

It belongs to the class I-like SAM-binding methyltransferase superfamily. Cation-dependent O-methyltransferase family.

In terms of biological role, specifically methylates an O atom of its substrate. The protein is Probable O-methyltransferase Rv1703c of Mycobacterium tuberculosis (strain ATCC 25618 / H37Rv).